A 293-amino-acid polypeptide reads, in one-letter code: Nucleotide-binding protein DvMF_0424 (293 aa).

13–20 (GLSGAGKS) is an ATP binding site. 65–68 (DLRE) lines the GTP pocket.

Belongs to the RapZ-like family.

Displays ATPase and GTPase activities. This is Nucleotide-binding protein DvMF_0424 from Nitratidesulfovibrio vulgaris (strain DSM 19637 / Miyazaki F) (Desulfovibrio vulgaris).